Reading from the N-terminus, the 217-residue chain is Thymidylate kinase (217 aa).

Residue 16–23 (GIDGAGKT) participates in ATP binding.

This sequence belongs to the thymidylate kinase family.

The catalysed reaction is dTMP + ATP = dTDP + ADP. In terms of biological role, phosphorylation of dTMP to form dTDP in both de novo and salvage pathways of dTTP synthesis. In Xylella fastidiosa (strain M12), this protein is Thymidylate kinase.